A 42-amino-acid polypeptide reads, in one-letter code: Photosystem II reaction center protein J (42 aa).

Residues 10–30 form a helical membrane-spanning segment; the sequence is IPLWLVGTVAGTAAIGLLGIF.

Belongs to the PsbJ family. PSII is composed of 1 copy each of membrane proteins PsbA, PsbB, PsbC, PsbD, PsbE, PsbF, PsbH, PsbI, PsbJ, PsbK, PsbL, PsbM, PsbT, PsbX, PsbY, PsbZ, Psb30/Ycf12, at least 3 peripheral proteins of the oxygen-evolving complex and a large number of cofactors. It forms dimeric complexes.

The protein resides in the plastid. Its subcellular location is the chloroplast thylakoid membrane. In terms of biological role, one of the components of the core complex of photosystem II (PSII). PSII is a light-driven water:plastoquinone oxidoreductase that uses light energy to abstract electrons from H(2)O, generating O(2) and a proton gradient subsequently used for ATP formation. It consists of a core antenna complex that captures photons, and an electron transfer chain that converts photonic excitation into a charge separation. The chain is Photosystem II reaction center protein J from Pleurastrum terricola (Filamentous green alga).